A 505-amino-acid chain; its full sequence is uncharacterized protein (505 aa).

His431 serves as the catalytic Proton acceptor.

The protein belongs to the GMC oxidoreductase family. It depends on FAD as a cofactor.

This is an uncharacterized protein from Sinorhizobium fredii (strain NBRC 101917 / NGR234).